Consider the following 88-residue polypeptide: Small ribosomal subunit protein uS15 (88 aa).

The protein belongs to the universal ribosomal protein uS15 family. As to quaternary structure, part of the 30S ribosomal subunit. Forms a bridge to the 50S subunit in the 70S ribosome, contacting the 23S rRNA.

Functionally, one of the primary rRNA binding proteins, it binds directly to 16S rRNA where it helps nucleate assembly of the platform of the 30S subunit by binding and bridging several RNA helices of the 16S rRNA. Its function is as follows. Forms an intersubunit bridge (bridge B4) with the 23S rRNA of the 50S subunit in the ribosome. The chain is Small ribosomal subunit protein uS15 from Syntrophus aciditrophicus (strain SB).